We begin with the raw amino-acid sequence, 213 residues long: MKTLLVLNSSGRVTRSLTRRLTSRFAEAWSAVHHDAVVVQRDLTLNPPPTINEPWIVAAFAAPDTPATVREAVLRASDELLDELTAADAVVIGAPVYNFGLPAQLKAYVDQIVRVGRSFALTGDAAVPYRALLAPKPVVVMTAASDGVMLPGGALAHLNLVEPHLTAALGFIGLTDVRFVRVADSVADQAAHPHSLAAAERAIEMILPRLAAA.

An FMN-binding site is contributed by Ser-10.

The protein belongs to the azoreductase type 1 family. Homodimer. The cofactor is FMN.

The catalysed reaction is 2 a quinone + NADH + H(+) = 2 a 1,4-benzosemiquinone + NAD(+). It catalyses the reaction N,N-dimethyl-1,4-phenylenediamine + anthranilate + 2 NAD(+) = 2-(4-dimethylaminophenyl)diazenylbenzoate + 2 NADH + 2 H(+). In terms of biological role, quinone reductase that provides resistance to thiol-specific stress caused by electrophilic quinones. Also exhibits azoreductase activity. Catalyzes the reductive cleavage of the azo bond in aromatic azo compounds to the corresponding amines. The protein is FMN-dependent NADH:quinone oxidoreductase of Opitutus terrae (strain DSM 11246 / JCM 15787 / PB90-1).